A 968-amino-acid polypeptide reads, in one-letter code: RNA polymerase-associated protein RapA (968 aa).

Residues 164 to 334 (EVGQRHAPRV…FARLRLLDPN (171 aa)) form the Helicase ATP-binding domain. An ATP-binding site is contributed by 177-184 (DEVGLGKT). A DEAH box motif is present at residues 280–283 (DEAH). The 175-residue stretch at 490 to 664 (RVEWLLNYLV…AAPTEQEGLD (175 aa)) folds into the Helicase C-terminal domain.

The protein belongs to the SNF2/RAD54 helicase family. RapA subfamily. Interacts with the RNAP. Has a higher affinity for the core RNAP than for the holoenzyme. Its ATPase activity is stimulated by binding to RNAP.

Transcription regulator that activates transcription by stimulating RNA polymerase (RNAP) recycling in case of stress conditions such as supercoiled DNA or high salt concentrations. Probably acts by releasing the RNAP, when it is trapped or immobilized on tightly supercoiled DNA. Does not activate transcription on linear DNA. Probably not involved in DNA repair. This Serratia proteamaculans (strain 568) protein is RNA polymerase-associated protein RapA.